The chain runs to 165 residues: UPF0303 protein Bcep18194_A4700 (165 aa).

It belongs to the UPF0303 family.

This Burkholderia lata (strain ATCC 17760 / DSM 23089 / LMG 22485 / NCIMB 9086 / R18194 / 383) protein is UPF0303 protein Bcep18194_A4700.